Reading from the N-terminus, the 210-residue chain is Na(+)-translocating NADH-quinone reductase subunit D (210 aa).

6 helical membrane-spanning segments follow: residues 14–34 (PIVN…ALAV), 42–62 (LVMA…ISMI), 72–92 (IIVQ…LLQA), 103–123 (VFVG…AYAM), 131–151 (FMDG…VGFV), and 178–198 (NGLL…IWII).

It belongs to the NqrDE/RnfAE family. In terms of assembly, composed of six subunits; NqrA, NqrB, NqrC, NqrD, NqrE and NqrF.

The protein localises to the cell inner membrane. It catalyses the reaction a ubiquinone + n Na(+)(in) + NADH + H(+) = a ubiquinol + n Na(+)(out) + NAD(+). In terms of biological role, NQR complex catalyzes the reduction of ubiquinone-1 to ubiquinol by two successive reactions, coupled with the transport of Na(+) ions from the cytoplasm to the periplasm. NqrA to NqrE are probably involved in the second step, the conversion of ubisemiquinone to ubiquinol. The polypeptide is Na(+)-translocating NADH-quinone reductase subunit D (Shewanella baltica (strain OS223)).